Reading from the N-terminus, the 173-residue chain is Nicotinamide-nucleotide adenylyltransferase (173 aa).

It belongs to the archaeal NMN adenylyltransferase family.

The protein resides in the cytoplasm. It carries out the reaction beta-nicotinamide D-ribonucleotide + ATP + H(+) = diphosphate + NAD(+). The protein operates within cofactor biosynthesis; NAD(+) biosynthesis; NAD(+) from nicotinamide D-ribonucleotide: step 1/1. In Methanosarcina barkeri (strain Fusaro / DSM 804), this protein is Nicotinamide-nucleotide adenylyltransferase.